Consider the following 31-residue polypeptide: Photosystem II reaction center protein T (31 aa).

The chain crosses the membrane as a helical span at residues 3 to 23; sequence ALVYTFLLVGTLGIIFFSIFF.

Belongs to the PsbT family. As to quaternary structure, PSII is composed of 1 copy each of membrane proteins PsbA, PsbB, PsbC, PsbD, PsbE, PsbF, PsbH, PsbI, PsbJ, PsbK, PsbL, PsbM, PsbT, PsbY, PsbZ, Psb30/Ycf12, at least 3 peripheral proteins of the oxygen-evolving complex and a large number of cofactors. It forms dimeric complexes.

The protein resides in the plastid. It localises to the chloroplast thylakoid membrane. Functionally, found at the monomer-monomer interface of the photosystem II (PS II) dimer, plays a role in assembly and dimerization of PSII. PSII is a light-driven water plastoquinone oxidoreductase, using light energy to abstract electrons from H(2)O, generating a proton gradient subsequently used for ATP formation. The sequence is that of Photosystem II reaction center protein T from Tupiella akineta (Green alga).